Reading from the N-terminus, the 505-residue chain is Maturase K (505 aa).

It belongs to the intron maturase 2 family. MatK subfamily.

Its subcellular location is the plastid. The protein resides in the chloroplast. Usually encoded in the trnK tRNA gene intron. Probably assists in splicing its own and other chloroplast group II introns. The protein is Maturase K of Calycanthus occidentalis (Spice bush).